A 207-amino-acid polypeptide reads, in one-letter code: U1 small nuclear ribonucleoprotein C (207 aa).

Residues 4 to 36 form a Matrin-type zinc finger; it reads YYCDYCDTYLTHDSPSVRKQHNAGYKHKANVRI. 2 stretches are compositionally biased toward pro residues: residues 105–115 and 122–131; these read PPQGYMPPPGV and PGAPLPPPPQ. The segment at 105 to 207 is disordered; that stretch reads PPQGYMPPPG…PSAESPESNE (103 aa). A compositionally biased stretch (low complexity) spans 132–144; sequence NGILRPPGMAPIP. Positions 162–183 are enriched in pro residues; that stretch reads GPPPNYNGLPPPPPYHTNPAAP. The segment covering 184 to 207 has biased composition (low complexity); that stretch reads PSGNFNNPNLNNPNPSAESPESNE.

Belongs to the U1 small nuclear ribonucleoprotein C family. In terms of assembly, U1 snRNP is composed of the 7 core Sm proteins B/B', D1, D2, D3, E, F and G that assemble in a heptameric protein ring on the Sm site of the small nuclear RNA to form the core snRNP, and at least 3 U1 snRNP-specific proteins U1-70K, U1-A and U1-C. U1-C interacts with U1 snRNA and the 5' splice-site region of the pre-mRNA.

It localises to the nucleus. Component of the spliceosomal U1 snRNP, which is essential for recognition of the pre-mRNA 5' splice-site and the subsequent assembly of the spliceosome. U1-C is directly involved in initial 5' splice-site recognition for both constitutive and regulated alternative splicing. The interaction with the 5' splice-site seems to precede base-pairing between the pre-mRNA and the U1 snRNA. Stimulates commitment or early (E) complex formation by stabilizing the base pairing of the 5' end of the U1 snRNA and the 5' splice-site region. The protein is U1 small nuclear ribonucleoprotein C of Arabidopsis thaliana (Mouse-ear cress).